Consider the following 350-residue polypeptide: C-X-C chemokine receptor type 1 (350 aa).

The Extracellular segment spans residues 1 to 39 (MSNITDPQMWDFDDLNFTGMPPADEDYSPCMLETETLNK). Asn3 and Asn16 each carry an N-linked (GlcNAc...) asparagine glycan. A helical transmembrane segment spans residues 40–66 (YVVIIAYALVFLLSLLGNSLVMLVILY). Residues 67 to 75 (SRVGRSVTD) are Cytoplasmic-facing. A helical transmembrane segment spans residues 76–96 (VYLLNLALADLLFALTLPIWA). The Extracellular portion of the chain corresponds to 97–111 (ASKVNGWIFGTFLCK). A disulfide bridge connects residues Cys110 and Cys187. Residues 112-133 (VVSLLKEVNFYSGILLLACISV) form a helical membrane-spanning segment. Residues 134 to 154 (DRYLAIVHATRTLTQKRHLVK) lie on the Cytoplasmic side of the membrane. Residues 155-174 (FVCLGCWGLSMNLSLPFFLF) form a helical membrane-spanning segment. Over 175-199 (RQAYHPNNSSPVCYEVLGNDTAKWR) the chain is Extracellular. A helical membrane pass occupies residues 200–220 (MVLRILPHTFGFIVPLFVMLF). The Cytoplasmic segment spans residues 221–242 (CYGFTLRTLFKAHMGQKHRAMR). Residues 243–264 (VIFAVVLIFLLCWLPYNLVLLA) form a helical membrane-spanning segment. Topologically, residues 265–285 (DTLMRTQVIQESCERRNNIGR) are extracellular. The chain crosses the membrane as a helical span at residues 286–308 (ALDATEILGFLHSCLNPIIYAFI). The Cytoplasmic portion of the chain corresponds to 309–350 (GQNFRHGFLKILAMHGLVSKEFLARHRVTSYTSSSVNVSSNL).

Belongs to the G-protein coupled receptor 1 family. Interacts with IL8. Interacts with GNAI2.

The protein localises to the cell membrane. Receptor to interleukin-8, which is a powerful neutrophils chemotactic factor. Binding of IL-8 to the receptor causes activation of neutrophils. This response is mediated via a G-protein that activates a phosphatidylinositol-calcium second messenger system. The sequence is that of C-X-C chemokine receptor type 1 (CXCR1) from Homo sapiens (Human).